The chain runs to 47 residues: MADYAEINNFPPELSSSGDKYFHLRNYSEYSEYTSGFFLSLMIFIKS.

The protein is Protein YtiD (ytiD) of Escherichia coli (strain K12).